The sequence spans 189 residues: Small ribosomal subunit protein uS5 (189 aa).

An S5 DRBM domain is found at 20 to 83 (FVDRLVHINR…ESAKRALIRV (64 aa)).

The protein belongs to the universal ribosomal protein uS5 family. In terms of assembly, part of the 30S ribosomal subunit. Contacts proteins S4 and S8.

In terms of biological role, with S4 and S12 plays an important role in translational accuracy. Its function is as follows. Located at the back of the 30S subunit body where it stabilizes the conformation of the head with respect to the body. The polypeptide is Small ribosomal subunit protein uS5 (Beijerinckia indica subsp. indica (strain ATCC 9039 / DSM 1715 / NCIMB 8712)).